The sequence spans 201 residues: Small ribosomal subunit protein uS4c (201 aa).

The segment at 13–43 is disordered; it reads RRLGDLPGLSRKAIKRPYPPGEHGQKPRKPS. Residues 90–154 enclose the S4 RNA-binding domain; sequence MRLDNTIFRL…SKQLVESYLA (65 aa).

This sequence belongs to the universal ribosomal protein uS4 family. As to quaternary structure, part of the 30S ribosomal subunit. Contacts protein S5. The interaction surface between S4 and S5 is involved in control of translational fidelity.

Its subcellular location is the plastid. The protein resides in the chloroplast. In terms of biological role, one of the primary rRNA binding proteins, it binds directly to 16S rRNA where it nucleates assembly of the body of the 30S subunit. With S5 and S12 plays an important role in translational accuracy. This Porphyra purpurea (Red seaweed) protein is Small ribosomal subunit protein uS4c (rps4).